The following is a 206-amino-acid chain: Superoxide dismutase [Mn] (206 aa).

Residues H27, H82, D168, and H172 each contribute to the Mn(2+) site.

Belongs to the iron/manganese superoxide dismutase family. As to quaternary structure, homodimer. Mn(2+) serves as cofactor.

The catalysed reaction is 2 superoxide + 2 H(+) = H2O2 + O2. Functionally, destroys superoxide anion radicals which are normally produced within the cells and which are toxic to biological systems. This chain is Superoxide dismutase [Mn] (sodA), found in Escherichia coli (strain K12).